Consider the following 329-residue polypeptide: MVKTQRVVITPGEPAGIGPDLIVQLAQREWPVELVVCADATLLTDRAAMLGLPLTLRPYSPNSPAQPQTAGTLTLLPVVLRESVTAGQLAVENGHYVVETLARACDGCLNGEFAALITGPVHKGVINDAGIPFTGHTEFFEERSQAKKVVMMLATEELRVALATTHLPLRDIADAITPALLHEVIAILHHDLRTKFGIAEPRILVCGLNPHAGEGGHMGTEEIDTIIPVLNELREQGMKLNGPLPADTLFQPKYLDNADAVLAMYHDQGLPVLKYQGFGRGVNITLGLPFIRTSVDHGTALELAGRGKADVGSFITALNLAIKMIVNTQ.

Substrate-binding residues include His-136 and Thr-137. Positions 166, 211, and 266 each coordinate a divalent metal cation. Substrate contacts are provided by Lys-274, Asn-283, and Arg-292.

This sequence belongs to the PdxA family. Homodimer. It depends on Zn(2+) as a cofactor. Mg(2+) serves as cofactor. The cofactor is Co(2+).

It is found in the cytoplasm. The catalysed reaction is 4-(phosphooxy)-L-threonine + NAD(+) = 3-amino-2-oxopropyl phosphate + CO2 + NADH. It functions in the pathway cofactor biosynthesis; pyridoxine 5'-phosphate biosynthesis; pyridoxine 5'-phosphate from D-erythrose 4-phosphate: step 4/5. Functionally, catalyzes the NAD(P)-dependent oxidation of 4-(phosphooxy)-L-threonine (HTP) into 2-amino-3-oxo-4-(phosphooxy)butyric acid which spontaneously decarboxylates to form 3-amino-2-oxopropyl phosphate (AHAP). This Escherichia coli O81 (strain ED1a) protein is 4-hydroxythreonine-4-phosphate dehydrogenase.